A 454-amino-acid polypeptide reads, in one-letter code: tRNA modification GTPase MnmE (454 aa).

Positions 26, 84, and 123 each coordinate (6S)-5-formyl-5,6,7,8-tetrahydrofolate. The region spanning G219–G378 is the TrmE-type G domain. N229 provides a ligand contact to K(+). GTP is bound by residues N229 to S234, T248 to T254, and D273 to G276. Residue S233 coordinates Mg(2+). K(+) is bound by residues T248, I250, and T253. T254 contacts Mg(2+). Residue K454 coordinates (6S)-5-formyl-5,6,7,8-tetrahydrofolate.

The protein belongs to the TRAFAC class TrmE-Era-EngA-EngB-Septin-like GTPase superfamily. TrmE GTPase family. Homodimer. Heterotetramer of two MnmE and two MnmG subunits. K(+) serves as cofactor.

The protein resides in the cytoplasm. Exhibits a very high intrinsic GTPase hydrolysis rate. Involved in the addition of a carboxymethylaminomethyl (cmnm) group at the wobble position (U34) of certain tRNAs, forming tRNA-cmnm(5)s(2)U34. In Acinetobacter baumannii (strain AYE), this protein is tRNA modification GTPase MnmE.